The chain runs to 292 residues: Homoserine kinase (292 aa).

Residue 84-94 (PLSRGLGSSSA) coordinates ATP.

It belongs to the GHMP kinase family. Homoserine kinase subfamily.

The protein resides in the cytoplasm. It carries out the reaction L-homoserine + ATP = O-phospho-L-homoserine + ADP + H(+). It participates in amino-acid biosynthesis; L-threonine biosynthesis; L-threonine from L-aspartate: step 4/5. Functionally, catalyzes the ATP-dependent phosphorylation of L-homoserine to L-homoserine phosphate. The protein is Homoserine kinase of Campylobacter jejuni subsp. jejuni serotype O:23/36 (strain 81-176).